The following is a 360-amino-acid chain: Phenylalanine--tRNA ligase alpha subunit (360 aa).

Residue Glu260 participates in Mg(2+) binding.

Belongs to the class-II aminoacyl-tRNA synthetase family. Phe-tRNA synthetase alpha subunit type 1 subfamily. In terms of assembly, tetramer of two alpha and two beta subunits. Mg(2+) is required as a cofactor.

The protein localises to the cytoplasm. The catalysed reaction is tRNA(Phe) + L-phenylalanine + ATP = L-phenylalanyl-tRNA(Phe) + AMP + diphosphate + H(+). In Rhodopseudomonas palustris (strain BisB5), this protein is Phenylalanine--tRNA ligase alpha subunit.